A 204-amino-acid polypeptide reads, in one-letter code: Large ribosomal subunit protein uL4 (204 aa).

The disordered stretch occupies residues 56–79 (VSGTTAKPYGQKRTGRARQGSLRS).

It belongs to the universal ribosomal protein uL4 family. As to quaternary structure, part of the 50S ribosomal subunit.

In terms of biological role, one of the primary rRNA binding proteins, this protein initially binds near the 5'-end of the 23S rRNA. It is important during the early stages of 50S assembly. It makes multiple contacts with different domains of the 23S rRNA in the assembled 50S subunit and ribosome. Its function is as follows. Forms part of the polypeptide exit tunnel. This Wolbachia pipientis subsp. Culex pipiens (strain wPip) protein is Large ribosomal subunit protein uL4.